A 152-amino-acid chain; its full sequence is MSRLPVLLLLQLLVRPGLQAPMTQTTPLKTSWVNCSNMIDEIITHLKQPPLPLLDFNNLNGEDQDILMENNLRRPNLEAFNRAVKSLQNASAIESILKNLLPCLPLATAAPTRHPIHIKDGDWNEFRRKLTFYLKTLENAQAQQTTLSLAIF.

The first 19 residues, 1 to 19, serve as a signal peptide directing secretion; that stretch reads MSRLPVLLLLQLLVRPGLQ. Residues N34 and N89 are each glycosylated (N-linked (GlcNAc...) asparagine). The cysteines at positions 35 and 103 are disulfide-linked.

Belongs to the IL-3 family. Interacts with IL3RA. Activated T-cells, mast cells, natural killer cells.

The protein localises to the secreted. In terms of biological role, cytokine secreted predominantly by activated T-lymphocytes as well as mast cells and osteoblastic cells that controls the production and differentiation of hematopoietic progenitor cells into lineage-restricted cells. Also stimulates mature basophils, eosinophils, and monocytes to become functionally activated. In addition, plays an important role in neural cell proliferation and survival. Participates as well in bone homeostasis and inhibits osteoclast differentiation by preventing NF-kappa-B nuclear translocation and activation. Mechanistically, exerts its biological effects through a receptor composed of IL3RA subunit and a signal transducing subunit IL3RB. Receptor stimulation results in the rapid activation of JAK2 kinase activity leading to STAT5-mediated transcriptional program. Alternatively, contributes to cell survival under oxidative stress in non-hematopoietic systems by activating pathways mediated by PI3K/AKT and ERK. The sequence is that of Interleukin-3 from Homo sapiens (Human).